The following is a 450-amino-acid chain: Phosphoglucosamine mutase (450 aa).

S101 (phosphoserine intermediate) is an active-site residue. 4 residues coordinate Mg(2+): S101, D240, D242, and D244. A Phosphoserine modification is found at S101.

The protein belongs to the phosphohexose mutase family. Mg(2+) serves as cofactor. Activated by phosphorylation.

It carries out the reaction alpha-D-glucosamine 1-phosphate = D-glucosamine 6-phosphate. Functionally, catalyzes the conversion of glucosamine-6-phosphate to glucosamine-1-phosphate. The sequence is that of Phosphoglucosamine mutase from Streptococcus equi subsp. zooepidemicus (strain MGCS10565).